A 671-amino-acid chain; its full sequence is DNA ligase (671 aa).

NAD(+) contacts are provided by residues 32–36 (DAEYD), 81–82 (SL), and E113. K115 serves as the catalytic N6-AMP-lysine intermediate. NAD(+)-binding residues include R136, E173, K290, and K314. C408, C411, C426, and C432 together coordinate Zn(2+). The BRCT domain maps to 593–671 (EIDSPFAGKT…EAEMIRLLGA (79 aa)).

It belongs to the NAD-dependent DNA ligase family. LigA subfamily. Mg(2+) is required as a cofactor. The cofactor is Mn(2+).

It catalyses the reaction NAD(+) + (deoxyribonucleotide)n-3'-hydroxyl + 5'-phospho-(deoxyribonucleotide)m = (deoxyribonucleotide)n+m + AMP + beta-nicotinamide D-nucleotide.. DNA ligase that catalyzes the formation of phosphodiester linkages between 5'-phosphoryl and 3'-hydroxyl groups in double-stranded DNA using NAD as a coenzyme and as the energy source for the reaction. It is essential for DNA replication and repair of damaged DNA. This Salmonella gallinarum (strain 287/91 / NCTC 13346) protein is DNA ligase.